The primary structure comprises 232 residues: 5'-methylthioadenosine/S-adenosylhomocysteine nucleosidase (232 aa).

Glu-12 acts as the Proton acceptor in catalysis. Substrate contacts are provided by residues Gly-78, Ile-152, and Met-173–Glu-174. Asp-197 (proton donor) is an active-site residue.

This sequence belongs to the PNP/UDP phosphorylase family. MtnN subfamily. In terms of assembly, homodimer.

The enzyme catalyses S-adenosyl-L-homocysteine + H2O = S-(5-deoxy-D-ribos-5-yl)-L-homocysteine + adenine. The catalysed reaction is S-methyl-5'-thioadenosine + H2O = 5-(methylsulfanyl)-D-ribose + adenine. It catalyses the reaction 5'-deoxyadenosine + H2O = 5-deoxy-D-ribose + adenine. The protein operates within amino-acid biosynthesis; L-methionine biosynthesis via salvage pathway; S-methyl-5-thio-alpha-D-ribose 1-phosphate from S-methyl-5'-thioadenosine (hydrolase route): step 1/2. Functionally, catalyzes the irreversible cleavage of the glycosidic bond in both 5'-methylthioadenosine (MTA) and S-adenosylhomocysteine (SAH/AdoHcy) to adenine and the corresponding thioribose, 5'-methylthioribose and S-ribosylhomocysteine, respectively. Also cleaves 5'-deoxyadenosine, a toxic by-product of radical S-adenosylmethionine (SAM) enzymes, into 5-deoxyribose and adenine. Thus, is required for in vivo function of the radical SAM enzymes biotin synthase and lipoic acid synthase, that are inhibited by 5'-deoxyadenosine accumulation. The sequence is that of 5'-methylthioadenosine/S-adenosylhomocysteine nucleosidase from Salmonella paratyphi B (strain ATCC BAA-1250 / SPB7).